The primary structure comprises 692 residues: DNA ligase (692 aa).

Polar residues predominate over residues 1 to 14; sequence MQPDLFSTASQADA. A disordered region spans residues 1 to 27; the sequence is MQPDLFSTASQADANATPEEPDASNPA. Residues 54 to 58, 103 to 104, and Glu-134 contribute to the NAD(+) site; these read DAEYD and SL. Residue Lys-136 is the N6-AMP-lysine intermediate of the active site. NAD(+)-binding residues include Arg-157, Glu-194, Lys-311, and Lys-335. 4 residues coordinate Zn(2+): Cys-429, Cys-432, Cys-447, and Cys-454. One can recognise a BRCT domain in the interval 612 to 692; it reads NKPKPFAGKT…ALLQLLDTHE (81 aa).

Belongs to the NAD-dependent DNA ligase family. LigA subfamily. It depends on Mg(2+) as a cofactor. Mn(2+) is required as a cofactor.

The enzyme catalyses NAD(+) + (deoxyribonucleotide)n-3'-hydroxyl + 5'-phospho-(deoxyribonucleotide)m = (deoxyribonucleotide)n+m + AMP + beta-nicotinamide D-nucleotide.. Functionally, DNA ligase that catalyzes the formation of phosphodiester linkages between 5'-phosphoryl and 3'-hydroxyl groups in double-stranded DNA using NAD as a coenzyme and as the energy source for the reaction. It is essential for DNA replication and repair of damaged DNA. In Janthinobacterium sp. (strain Marseille) (Minibacterium massiliensis), this protein is DNA ligase.